The sequence spans 369 residues: Muscleblind-like protein 1 (369 aa).

C3H1-type zinc fingers lie at residues 13-41 (WLTLEVCREFQRGTCSRPDTECKFAHPSK), 47-73 (NGRVIACFDSLKGRCSRENCKYLHPPP), 178-206 (TDRLEVCREYQRGNCNRGENDCRFAHPAD), and 214-240 (DNTVTVCMDYIKGRCSREKCKYFHPPA).

It belongs to the muscleblind family.

It is found in the nucleus. The protein localises to the cytoplasm. The protein resides in the cytoplasmic granule. Functionally, involved in pre-mRNA alternative splicing regulation. Binds to CUG triplet repeat in RNA. In Gallus gallus (Chicken), this protein is Muscleblind-like protein 1 (MBNL1).